Consider the following 244-residue polypeptide: 14-3-3 protein beta/alpha (244 aa).

M1 carries the post-translational modification N-acetylmethionine. S184 is subject to Phosphoserine.

This sequence belongs to the 14-3-3 family. In terms of assembly, homodimer, and heterodimer with other family members. Post-translationally, phosphorylated.

It localises to the cytoplasm. Functionally, adapter protein implicated in the regulation of a large spectrum of both general and specialized signaling pathways. Binds to a large number of partners, usually by recognition of a phosphoserine or phosphothreonine motif. Binding generally results in the modulation of the activity of the binding partner. The chain is 14-3-3 protein beta/alpha (YWHAB) from Gallus gallus (Chicken).